Here is a 307-residue protein sequence, read N- to C-terminus: 2-carboxy-1,4-naphthoquinone phytyltransferase (307 aa).

8 helical membrane-spanning segments follow: residues 27-47 (MYTVAVVPITVGSAVAYGLTG), 51-71 (GDVFTIFLLSAIAIIAWINLS), 98-118 (LVFLISNFFLLAGVLGLMSMS), 125-145 (TVLELIGVAIFLGYTYQGPPF), 147-167 (LGYLGLGELICLITFGPLAIA), 177-197 (FSWNLLTPSVFVGISTAIILF), 223-243 (LGSQVLTLSVVSLYLITAIGV), and 284-304 (FIAVNLHFFSGMLMAAGYGWA).

This sequence belongs to the MenA family. Type 2 subfamily.

It localises to the cell inner membrane. The enzyme catalyses 2-carboxy-1,4-naphthoquinone + phytyl diphosphate + H(+) = demethylphylloquinone + CO2 + diphosphate. Its pathway is cofactor biosynthesis; phylloquinone biosynthesis. In terms of biological role, involved in the synthesis of phylloquinone (vitamin K1). Catalyzes the transfer of a prenyl chain to 2-carboxy-1,4-naphthoquinone. The protein is 2-carboxy-1,4-naphthoquinone phytyltransferase of Synechocystis sp. (strain ATCC 27184 / PCC 6803 / Kazusa).